We begin with the raw amino-acid sequence, 434 residues long: Glutamate-1-semialdehyde 2,1-aminomutase 1 (434 aa).

Position 270 is an N6-(pyridoxal phosphate)lysine (Lys-270).

The protein belongs to the class-III pyridoxal-phosphate-dependent aminotransferase family. HemL subfamily. Homodimer. It depends on pyridoxal 5'-phosphate as a cofactor.

The protein resides in the cytoplasm. The enzyme catalyses (S)-4-amino-5-oxopentanoate = 5-aminolevulinate. It participates in porphyrin-containing compound metabolism; protoporphyrin-IX biosynthesis; 5-aminolevulinate from L-glutamyl-tRNA(Glu): step 2/2. The chain is Glutamate-1-semialdehyde 2,1-aminomutase 1 from Bacillus anthracis (strain CDC 684 / NRRL 3495).